Here is a 190-residue protein sequence, read N- to C-terminus: NADH-quinone oxidoreductase subunit B (190 aa).

4 residues coordinate [4Fe-4S] cluster: Cys-67, Cys-68, Cys-132, and Cys-162.

It belongs to the complex I 20 kDa subunit family. In terms of assembly, NDH-1 is composed of 14 different subunits. Subunits NuoB, C, D, E, F, and G constitute the peripheral sector of the complex. [4Fe-4S] cluster is required as a cofactor.

Its subcellular location is the cell inner membrane. It carries out the reaction a quinone + NADH + 5 H(+)(in) = a quinol + NAD(+) + 4 H(+)(out). NDH-1 shuttles electrons from NADH, via FMN and iron-sulfur (Fe-S) centers, to quinones in the respiratory chain. The immediate electron acceptor for the enzyme in this species is believed to be ubiquinone. Couples the redox reaction to proton translocation (for every two electrons transferred, four hydrogen ions are translocated across the cytoplasmic membrane), and thus conserves the redox energy in a proton gradient. This is NADH-quinone oxidoreductase subunit B from Anaplasma marginale (strain Florida).